The following is a 144-amino-acid chain: MYIKSFSAKSNDFKKMWYCIDATGKILGRLATNIASRLRGKHKVEYTPHVDIGDYLIVINAKNIKVTGKKCTDKFYYHHTGYVGGLKKIAFKDMLHRYPERIIEIAVRGMLPKGPLGRSMFKKLKVYANDNHNHSAQNPKILNI.

The protein belongs to the universal ribosomal protein uL13 family. Part of the 50S ribosomal subunit.

Functionally, this protein is one of the early assembly proteins of the 50S ribosomal subunit, although it is not seen to bind rRNA by itself. It is important during the early stages of 50S assembly. In Buchnera aphidicola subsp. Baizongia pistaciae (strain Bp), this protein is Large ribosomal subunit protein uL13.